Here is a 180-residue protein sequence, read N- to C-terminus: Oligoribonuclease (180 aa).

Residues 7–170 (LIWIDLEMTG…DDIRESIAEL (164 aa)) enclose the Exonuclease domain. Tyrosine 128 is an active-site residue.

It belongs to the oligoribonuclease family.

It is found in the cytoplasm. Functionally, 3'-to-5' exoribonuclease specific for small oligoribonucleotides. The polypeptide is Oligoribonuclease (Pseudomonas fluorescens (strain ATCC BAA-477 / NRRL B-23932 / Pf-5)).